The primary structure comprises 75 residues: DNA-directed RNA polymerase subunit omega (75 aa).

The protein belongs to the RNA polymerase subunit omega family. In cyanobacteria the RNAP catalytic core is composed of 2 alpha, 1 beta, 1 beta', 1 gamma and 1 omega subunit. When a sigma factor is associated with the core the holoenzyme is formed, which can initiate transcription.

It carries out the reaction RNA(n) + a ribonucleoside 5'-triphosphate = RNA(n+1) + diphosphate. In terms of biological role, promotes RNA polymerase assembly. Latches the N- and C-terminal regions of the beta' subunit thereby facilitating its interaction with the beta and alpha subunits. The polypeptide is DNA-directed RNA polymerase subunit omega (Synechococcus sp. (strain WH7803)).